The sequence spans 481 residues: (S)-N-methylcoclaurine 3'-hydroxylase isozyme 1 (481 aa).

Cys423 contacts heme.

It belongs to the cytochrome P450 family. The cofactor is heme. Restricted to the parietal region of sieve elements adjacent or proximal to laticifers in roots, stems, leaves, carpels and hypocotyls.

Its subcellular location is the endoplasmic reticulum. It catalyses the reaction (S)-N-methylcoclaurine + reduced [NADPH--hemoprotein reductase] + O2 = (S)-3'-hydroxy-N-methylcoclaurine + oxidized [NADPH--hemoprotein reductase] + H2O + H(+). It functions in the pathway alkaloid biosynthesis; (S)-reticuline biosynthesis; (S)-reticuline from (S)-norcoclaurine: step 3/4. In terms of biological role, cytochrome P450 monooxygenase involved in the biosynthesis of benzylisoquinoline alkaloids. Catalyzes the 3'-hydroxylation of (S)-N-methylcoclaurine. The sequence is that of (S)-N-methylcoclaurine 3'-hydroxylase isozyme 1 from Papaver somniferum (Opium poppy).